Consider the following 728-residue polypeptide: 1,4-alpha-glucan branching enzyme GlgB (728 aa).

Asp405 (nucleophile) is an active-site residue. Residue Glu458 is the Proton donor of the active site.

This sequence belongs to the glycosyl hydrolase 13 family. GlgB subfamily. Monomer.

It carries out the reaction Transfers a segment of a (1-&gt;4)-alpha-D-glucan chain to a primary hydroxy group in a similar glucan chain.. Its pathway is glycan biosynthesis; glycogen biosynthesis. Catalyzes the formation of the alpha-1,6-glucosidic linkages in glycogen by scission of a 1,4-alpha-linked oligosaccharide from growing alpha-1,4-glucan chains and the subsequent attachment of the oligosaccharide to the alpha-1,6 position. The sequence is that of 1,4-alpha-glucan branching enzyme GlgB from Shigella flexneri serotype 5b (strain 8401).